The primary structure comprises 229 residues: Ribulose-phosphate 3-epimerase (229 aa).

Ser13 provides a ligand contact to substrate. Residues His36, Asp38, and His69 each coordinate a divalent metal cation. Asp38 serves as the catalytic Proton acceptor. Substrate contacts are provided by residues His69, 145–148, 178–180, and 200–201; these read GFGG, DGG, and GS. Asp178 is a binding site for a divalent metal cation. Asp178 (proton donor) is an active-site residue.

It belongs to the ribulose-phosphate 3-epimerase family. The cofactor is a divalent metal cation.

It carries out the reaction D-ribulose 5-phosphate = D-xylulose 5-phosphate. It participates in carbohydrate degradation. Catalyzes the reversible epimerization of D-ribulose 5-phosphate to D-xylulose 5-phosphate. This Mycobacterium bovis (strain ATCC BAA-935 / AF2122/97) protein is Ribulose-phosphate 3-epimerase.